The sequence spans 435 residues: Zinc finger CCCH domain-containing protein 16 (435 aa).

The segment at Met-1–Gln-27 adopts a C3H1-type zinc-finger fold. The tract at residues Arg-2–Ala-88 is 6 X 2 AA repeats of F-G. Disordered regions lie at residues Pro-25–Cys-105 and Thr-205–Asn-374. 2 consecutive repeat copies span residues Phe-34–Gly-35 and Phe-36–Gly-37. Low complexity predominate over residues Gln-39–Asn-51. 2 consecutive repeat copies span residues Phe-56 to Gly-57 and Phe-58 to Gly-59. A compositionally biased stretch (polar residues) spans Gly-63–Arg-77. The segment covering Thr-78–Gln-99 has biased composition (low complexity). 2 stretches are compositionally biased toward polar residues: residues Thr-205 to Pro-320 and Ser-328 to Lys-339. A run of 2 repeats spans residues Phe-343–Gly-344 and Phe-359–Gly-360. Positions Thr-351 to Asn-374 are enriched in polar residues.

In terms of assembly, part of the nuclear pore complex (NPC). The NPC has an eight-fold symmetrical structure comprising a central transport channel and two rings, the cytoplasmic and nuclear rings, to which eight filaments are attached. The cytoplasmic filaments have loose ends, while the nuclear filaments are joined in a distal ring, forming a nuclear basket. NPCs are highly dynamic in configuration and composition, and can be devided in 3 subcomplexes, the NUP62 subcomplex, the NUP107-160 subcomplex and the NUP93 subcomplex, containing approximately 30 different nucleoporin proteins.

The protein resides in the nucleus envelope. The protein localises to the nucleus. It localises to the nuclear pore complex. The protein is Zinc finger CCCH domain-containing protein 16 of Arabidopsis thaliana (Mouse-ear cress).